The chain runs to 881 residues: Low-affinity phosphate transporter PHO90 (881 aa).

One can recognise an SPX domain in the interval M1–E288. 12 helical membrane passes run I417–A437, A456–L476, I493–E513, V514–C534, V539–A559, A581–I601, F663–V683, F691–L711, A718–S738, G758–S778, I805–F825, and A854–V874.

The protein belongs to the CitM (TC 2.A.11) transporter family.

It localises to the membrane. In terms of biological role, low-affinity phosphate transporter involved in the control of cellular phosphate levels. This chain is Low-affinity phosphate transporter PHO90 (PHO90), found in Saccharomyces cerevisiae (strain ATCC 204508 / S288c) (Baker's yeast).